The primary structure comprises 414 residues: Probable cytochrome P450 127A1 (414 aa).

C364 lines the heme pocket.

It belongs to the cytochrome P450 family. It depends on heme as a cofactor.

Its function is as follows. Cytochromes P450 are a group of heme-thiolate monooxygenases. They oxidize a variety of structurally unrelated compounds, including steroids, fatty acids, and xenobiotics. The sequence is that of Probable cytochrome P450 127A1 (cyp127A1) from Sinorhizobium fredii (strain NBRC 101917 / NGR234).